The primary structure comprises 264 residues: Thymidylate synthase (264 aa).

Arginine 21 provides a ligand contact to dUMP. Histidine 51 provides a ligand contact to (6R)-5,10-methylene-5,6,7,8-tetrahydrofolate. Residue 126-127 (RR) coordinates dUMP. The active-site Nucleophile is the cysteine 146. DUMP-binding positions include 166–169 (RSAD), asparagine 177, and 207–209 (HIY). Residue aspartate 169 coordinates (6R)-5,10-methylene-5,6,7,8-tetrahydrofolate. A (6R)-5,10-methylene-5,6,7,8-tetrahydrofolate-binding site is contributed by alanine 263.

It belongs to the thymidylate synthase family. Bacterial-type ThyA subfamily. As to quaternary structure, homodimer.

It localises to the cytoplasm. The enzyme catalyses dUMP + (6R)-5,10-methylene-5,6,7,8-tetrahydrofolate = 7,8-dihydrofolate + dTMP. It functions in the pathway pyrimidine metabolism; dTTP biosynthesis. Its function is as follows. Catalyzes the reductive methylation of 2'-deoxyuridine-5'-monophosphate (dUMP) to 2'-deoxythymidine-5'-monophosphate (dTMP) while utilizing 5,10-methylenetetrahydrofolate (mTHF) as the methyl donor and reductant in the reaction, yielding dihydrofolate (DHF) as a by-product. This enzymatic reaction provides an intracellular de novo source of dTMP, an essential precursor for DNA biosynthesis. This Brucella ovis (strain ATCC 25840 / 63/290 / NCTC 10512) protein is Thymidylate synthase.